Reading from the N-terminus, the 602-residue chain is Cytokine-like nuclear factor N-PAC (602 aa).

Ser-8 and Ser-10 each carry phosphoserine. The region spanning 22-81 is the PWWP domain; it reads PKDLIWAKMKGFTPWPGMIVDPPLDLLSQQRRANTKCVFFFGSRNFAWIEENNIKPFEGP. The tract at residues 162-262 is disordered; it reads GSPDEGDGLD…ASSTPTGRRR (101 aa). 3 stretches are compositionally biased toward polar residues: residues 176 to 188, 204 to 217, and 224 to 233; these read ADSS…SPAV, AATS…SAKS, and SAQQSPSGPS. 3 positions are modified to phosphoserine: Ser-224, Ser-228, and Ser-243. A dehydrogenase domain region spans residues 309–602; sequence RDIVPSEQTF…SSAVFVRSRF (294 aa). NAD(+) contacts are provided by residues 319-333, Thr-411, and Arg-554; that span reads GFLG…IVKD.

This sequence belongs to the HIBADH-related family. NP60 subfamily. Binds to mononucleosomes. Interacts with male-specific lethal (MSL) histone acetyltransferase complex at least composed of mof, msl-1, msl-2 and msl-3.

The protein localises to the chromosome. Functionally, nucleosome-destabilizing factor that is recruited to genes during transcriptional activation and colocalizes with a subset of trimethylated 'Lys-36' histone H3 (H3K36me3)-enriched regions. Binds DNA (in vitro). Facilitates Pol II transcription through nucleosomes. Facilitates male-specific lethal (MSL) histone acetyltransferase complex targeting to active genes on the X chromosome. Stimulates the acetylation of 'Lys-56' of nucleosomal histone H3 (H3K56ac) by nej. May have oxidoreductase activity. In Drosophila melanogaster (Fruit fly), this protein is Cytokine-like nuclear factor N-PAC.